The sequence spans 125 residues: UPF0763 protein NAMH_0545 (125 aa).

It belongs to the UPF0763 family.

This is UPF0763 protein NAMH_0545 from Nautilia profundicola (strain ATCC BAA-1463 / DSM 18972 / AmH).